The chain runs to 263 residues: Acyl-[acyl-carrier-protein]--UDP-N-acetylglucosamine O-acyltransferase (263 aa).

This sequence belongs to the transferase hexapeptide repeat family. LpxA subfamily. As to quaternary structure, homotrimer.

It is found in the cytoplasm. It catalyses the reaction a (3R)-hydroxyacyl-[ACP] + UDP-N-acetyl-alpha-D-glucosamine = a UDP-3-O-[(3R)-3-hydroxyacyl]-N-acetyl-alpha-D-glucosamine + holo-[ACP]. It participates in glycolipid biosynthesis; lipid IV(A) biosynthesis; lipid IV(A) from (3R)-3-hydroxytetradecanoyl-[acyl-carrier-protein] and UDP-N-acetyl-alpha-D-glucosamine: step 1/6. Functionally, involved in the biosynthesis of lipid A, a phosphorylated glycolipid that anchors the lipopolysaccharide to the outer membrane of the cell. The protein is Acyl-[acyl-carrier-protein]--UDP-N-acetylglucosamine O-acyltransferase of Xanthomonas campestris pv. campestris (strain 8004).